The following is a 616-amino-acid chain: Centrosomal protein of 70 kDa (616 aa).

Coiled-coil stretches lie at residues 96 to 210 (EETT…EEER) and 273 to 335 (NYKG…NIKL). One copy of the TPR repeat lies at 502 to 535 (NGVFPRMNEVYTRLGEMNNAVRNLQELLELDSSS).

As to quaternary structure, directly interacts with tubulin-gamma; this interaction determines centrosomal localization.

It localises to the cytoplasm. The protein localises to the cytoskeleton. It is found in the microtubule organizing center. Its subcellular location is the centrosome. In terms of biological role, plays a role in the organization of both preexisting and nascent microtubules in interphase cells. During mitosis, required for the organization and orientation of the mitotic spindle. This Mus musculus (Mouse) protein is Centrosomal protein of 70 kDa (Cep70).